The chain runs to 356 residues: 3-dehydroquinate synthase (356 aa).

NAD(+) is bound by residues 71-76 (EGEASK), 105-109 (GVTGD), 129-130 (TS), K142, and K151. The Zn(2+) site is built by E184, H247, and H264.

It belongs to the sugar phosphate cyclases superfamily. Dehydroquinate synthase family. It depends on Co(2+) as a cofactor. Zn(2+) serves as cofactor. The cofactor is NAD(+).

It localises to the cytoplasm. The enzyme catalyses 7-phospho-2-dehydro-3-deoxy-D-arabino-heptonate = 3-dehydroquinate + phosphate. It functions in the pathway metabolic intermediate biosynthesis; chorismate biosynthesis; chorismate from D-erythrose 4-phosphate and phosphoenolpyruvate: step 2/7. Functionally, catalyzes the conversion of 3-deoxy-D-arabino-heptulosonate 7-phosphate (DAHP) to dehydroquinate (DHQ). The sequence is that of 3-dehydroquinate synthase from Lactococcus lactis subsp. cremoris (strain SK11).